Here is a 351-residue protein sequence, read N- to C-terminus: tRNA-specific 2-thiouridylase MnmA (351 aa).

Residues Gly-7 to Ser-14 and Leu-33 each bind ATP. The active-site Nucleophile is Cys-94. Residues Cys-94 and Cys-193 are joined by a disulfide bond. Position 119 (Gly-119) interacts with ATP. Positions Lys-143–Gln-145 are interaction with tRNA. Residue Cys-193 is the Cysteine persulfide intermediate of the active site. Residues Arg-298–Tyr-299 form an interaction with tRNA region.

Belongs to the MnmA/TRMU family.

It localises to the cytoplasm. The catalysed reaction is S-sulfanyl-L-cysteinyl-[protein] + uridine(34) in tRNA + AH2 + ATP = 2-thiouridine(34) in tRNA + L-cysteinyl-[protein] + A + AMP + diphosphate + H(+). Its function is as follows. Catalyzes the 2-thiolation of uridine at the wobble position (U34) of tRNA, leading to the formation of s(2)U34. The chain is tRNA-specific 2-thiouridylase MnmA from Nostoc punctiforme (strain ATCC 29133 / PCC 73102).